The chain runs to 255 residues: Acetylglutamate kinase (255 aa).

Residues 40–41 (GG), R62, and N153 contribute to the substrate site.

It belongs to the acetylglutamate kinase family. ArgB subfamily.

The protein localises to the cytoplasm. It catalyses the reaction N-acetyl-L-glutamate + ATP = N-acetyl-L-glutamyl 5-phosphate + ADP. It participates in amino-acid biosynthesis; L-arginine biosynthesis; N(2)-acetyl-L-ornithine from L-glutamate: step 2/4. Functionally, catalyzes the ATP-dependent phosphorylation of N-acetyl-L-glutamate. This chain is Acetylglutamate kinase, found in Bacillus anthracis (strain CDC 684 / NRRL 3495).